The primary structure comprises 101 residues: Small ribosomal subunit protein bS18c (101 aa).

The span at 1–19 (MDKSKQPFRKSKRSFRRRL) shows a compositional bias: basic residues. Residues 1-24 (MDKSKQPFRKSKRSFRRRLPPIGS) form a disordered region.

It belongs to the bacterial ribosomal protein bS18 family. As to quaternary structure, part of the 30S ribosomal subunit.

It localises to the plastid. The protein localises to the chloroplast. This is Small ribosomal subunit protein bS18c from Amborella trichopoda.